Here is a 516-residue protein sequence, read N- to C-terminus: Maintenance of mitochondrial morphology protein 1 (516 aa).

Residues 1-43 (MAGSTSASLQTPYFPSSTQINPVRVDHTLPLPPAQPSLSFTQG) are Lumenal-facing. The chain crosses the membrane as a helical span at residues 44–64 (LLVGQLSVVLLIGAFIKFFIF). Residues 65–516 (GEAPPPPSRG…GSMPDTVTET (452 aa)) are Cytoplasmic-facing. 4 disordered regions span residues 70–118 (PPSR…SSST), 295–349 (TSDQ…SKHG), 420–466 (RTGL…IDRG), and 485–516 (GGHQNQSGRDGGRGGNEQFAMPGSMPDTVTET). Composition is skewed to polar residues over residues 74 to 96 (GLSNRTSTHPRSYSINAASTDSS), 105 to 118 (STSNILRPVPSSST), and 295 to 312 (TSDQTMSPIPTPHDTTSE). In terms of domain architecture, SMP-LTD spans 151 to 412 (QPESLDWFNV…EPRVQVVGLP (262 aa)). A compositionally biased stretch (gly residues) spans 449 to 460 (GVSGGGGGGGSM).

It belongs to the MMM1 family. Homodimer. Component of the ER-mitochondria encounter structure (ERMES) or MDM complex, composed of MMM1, MDM10, MDM12 and MDM34. An MMM1 homodimer associates with one molecule of MDM12 on each side in a pairwise head-to-tail manner, and the SMP-LTD domains of MMM1 and MDM12 generate a continuous hydrophobic tunnel for phospholipid trafficking.

It localises to the endoplasmic reticulum membrane. In terms of biological role, component of the ERMES/MDM complex, which serves as a molecular tether to connect the endoplasmic reticulum (ER) and mitochondria. Components of this complex are involved in the control of mitochondrial shape and protein biogenesis, and function in nonvesicular lipid trafficking between the ER and mitochondria. The MDM12-MMM1 subcomplex functions in the major beta-barrel assembly pathway that is responsible for biogenesis of all outer membrane beta-barrel proteins, and acts in a late step after the SAM complex. The MDM10-MDM12-MMM1 subcomplex further acts in the TOM40-specific pathway after the action of the MDM12-MMM1 complex. Essential for establishing and maintaining the structure of mitochondria and maintenance of mtDNA nucleoids. The chain is Maintenance of mitochondrial morphology protein 1 from Paracoccidioides brasiliensis (strain Pb18).